Here is a 362-residue protein sequence, read N- to C-terminus: Guanine nucleotide-binding protein alpha-10 subunit (362 aa).

Glycine 2 carries N-myristoyl glycine lipidation. Residue cysteine 4 is the site of S-palmitoyl cysteine attachment. Positions 35 to 362 constitute a G-alpha domain; sequence LEQSVLLIGP…QENLKDTGMI (328 aa). Residues 38–51 are G1 motif; sequence SVLLIGPGESGKST. GTP-binding positions include 43–50, 184–190, 209–213, 278–281, and alanine 335; these read GPGESGKS, VRIRVPT, DCGGQ, and NKID. The Mg(2+) site is built by serine 50 and threonine 190. The G2 motif stretch occupies residues 182 to 190; it reads DIVRIRVPT. A G3 motif region spans residues 205-214; sequence LSVIDCGGQR. The interval 274 to 281 is G4 motif; the sequence is ILFLNKID. The interval 333–337 is G5 motif; the sequence is TCAIS.

It belongs to the G-alpha family. As to quaternary structure, g proteins are composed of 3 units; alpha, beta and gamma. The alpha chain contains the guanine nucleotide binding site.

Its function is as follows. Guanine nucleotide-binding proteins (G proteins) are involved as modulators or transducers in various transmembrane signaling systems. The protein is Guanine nucleotide-binding protein alpha-10 subunit (gpa-10) of Caenorhabditis briggsae.